Here is a 540-residue protein sequence, read N- to C-terminus: MKEPRIFPRERPTPWTRAPLPPRGRLDGSLGPQGGPVLNTGHPLGMNSDPFLMASSSLGGNLAPFPRNPSPFPTSSGSLASNPAPFPAGARDPGLASFPRGMNPTSTGAVSFPRPGGLLGPSPGSTLNPRAGALPGPGPLSNPRLGSLPGPGPVSNPRPSGLLGTGPDPRSGGPMGPGSGPSLRAGVLLTPGNGPPNPRPVGLGPGPSPNLRSGFVGTNPAPRSSMFPGPGLGPNPRSSGLGPGLGPNPRAGGLGPGPNLDARAGGLLGTGSGLNLRMAGPQGLDLAPILRAAGLLGANSASFSQASGNMGTSPSSMARLPGPIGPNSGPGSRGIGLPGPNPSPLSRAPGPVGPNSAHFARPAGPMGVNANPFPRGTGSGGLNPAAFSQSSNTLASNPINFQRSAGLQGSSPAVFPRASGPLGPNPANFPRATGLQGPSPATFPRSIGPLGPGQVTFPRPAPRPLGSSPAGPVGINPAPFARPTGTLGVNPASFPRMNGPVSKTLVPFPRVGSLPGTNPAAFPRPGGPMAAMYPNGMLPP.

Over residues 1–12 (MKEPRIFPRERP) the composition is skewed to basic and acidic residues. 2 disordered regions span residues 1–264 (MKEP…DARA) and 304–389 (SQAS…AFSQ). 2 stretches are compositionally biased toward low complexity: residues 113-125 (PRPG…SPGS) and 180-192 (GPSL…LTPG). Residues 304–316 (SQASGNMGTSPSS) show a composition bias toward polar residues. Ser-313 is modified (phosphoserine). A compositionally biased stretch (low complexity) spans 321 to 330 (PGPIGPNSGP). Arg-375 bears the Asymmetric dimethylarginine mark. At Arg-403 the chain carries Omega-N-methylarginine. At Ser-439 the chain carries Phosphoserine. The disordered stretch occupies residues 516 to 540 (GTNPAAFPRPGGPMAAMYPNGMLPP).

It belongs to the DERPC family.

Its subcellular location is the nucleus. In terms of biological role, potential tumor suppressor. In Bos taurus (Bovine), this protein is Decreased expression in renal and prostate cancer protein.